The sequence spans 185 residues: MSNAEIFAASGEGVNPIVPNIWDTALVLIGFAILLFIVIKFVVPMFEKTFAERTEAIEGGIAKAEEAQAEATAALEEYKQQLAEARAEANKIREDARAEGAQILADLKEKAASESARITEQAQVAIAAERQAAVVSLRSEVGSLATTLAGRIVGESLQDDARSNRVVDRFLADLEANSKSEGAAK.

A helical transmembrane segment spans residues 26-46; sequence LVLIGFAILLFIVIKFVVPMF.

Belongs to the ATPase B chain family. F-type ATPases have 2 components, F(1) - the catalytic core - and F(0) - the membrane proton channel. F(1) has five subunits: alpha(3), beta(3), gamma(1), delta(1), epsilon(1). F(0) has three main subunits: a(1), b(2) and c(10-14). The alpha and beta chains form an alternating ring which encloses part of the gamma chain. F(1) is attached to F(0) by a central stalk formed by the gamma and epsilon chains, while a peripheral stalk is formed by the delta and b chains.

Its subcellular location is the cell membrane. In terms of biological role, f(1)F(0) ATP synthase produces ATP from ADP in the presence of a proton or sodium gradient. F-type ATPases consist of two structural domains, F(1) containing the extramembraneous catalytic core and F(0) containing the membrane proton channel, linked together by a central stalk and a peripheral stalk. During catalysis, ATP synthesis in the catalytic domain of F(1) is coupled via a rotary mechanism of the central stalk subunits to proton translocation. Its function is as follows. Component of the F(0) channel, it forms part of the peripheral stalk, linking F(1) to F(0). This is ATP synthase subunit b from Renibacterium salmoninarum (strain ATCC 33209 / DSM 20767 / JCM 11484 / NBRC 15589 / NCIMB 2235).